The chain runs to 486 residues: ATP-dependent rRNA helicase RRP3 (486 aa).

The span at 1-11 (MSKVTKQSKSH) shows a compositional bias: basic residues. The disordered stretch occupies residues 1 to 52 (MSKVTKQSKSHKSSELVSLAEKIKQKALENRKQSREESQATEEANTASETEA). A coiled-coil region spans residues 17 to 49 (VSLAEKIKQKALENRKQSREESQATEEANTASE). Basic and acidic residues predominate over residues 21-38 (EKIKQKALENRKQSREES). Positions 41-52 (TEEANTASETEA) are enriched in low complexity. The Q motif signature appears at 66–94 (SSFRELDLVPELIEACDNLNFTKPTPIQS). Positions 97–269 (IPPALQGKDI…RASLTNPVKC (173 aa)) constitute a Helicase ATP-binding domain. An ATP-binding site is contributed by 110 to 117 (AQTGSGKT). The short motif at 216–219 (DEAD) is the DEAD box element. Positions 300-446 (LLNEFIGKTT…SIVLSLRDSV (147 aa)) constitute a Helicase C-terminal domain. The tract at residues 459–486 (RRNKEKQTRGKGRRSRTATRENMDKEEE) is disordered. Positions 476-486 (ATRENMDKEEE) are enriched in basic and acidic residues.

The protein belongs to the DEAD box helicase family. DDX47/RRP3 subfamily. As to quaternary structure, interacts with the SSU processome.

The protein resides in the nucleus. It catalyses the reaction ATP + H2O = ADP + phosphate + H(+). ATP-dependent rRNA helicase required for pre-ribosomal RNA processing. Involved in the maturation of the 35S-pre-rRNA and to its cleavage to mature 18S rRNA. The protein is ATP-dependent rRNA helicase RRP3 of Eremothecium gossypii (strain ATCC 10895 / CBS 109.51 / FGSC 9923 / NRRL Y-1056) (Yeast).